A 236-amino-acid polypeptide reads, in one-letter code: 2,3,4,5-tetrahydropyridine-2,6-dicarboxylate N-acetyltransferase (236 aa).

Belongs to the transferase hexapeptide repeat family. DapH subfamily.

It carries out the reaction (S)-2,3,4,5-tetrahydrodipicolinate + acetyl-CoA + H2O = L-2-acetamido-6-oxoheptanedioate + CoA. Its pathway is amino-acid biosynthesis; L-lysine biosynthesis via DAP pathway; LL-2,6-diaminopimelate from (S)-tetrahydrodipicolinate (acetylase route): step 1/3. Catalyzes the transfer of an acetyl group from acetyl-CoA to tetrahydrodipicolinate. This chain is 2,3,4,5-tetrahydropyridine-2,6-dicarboxylate N-acetyltransferase, found in Listeria ivanovii.